The sequence spans 529 residues: MSVKWTSVILLIQLSFYFSSGSCGKVLVWAAEYSHWMNMKTILEELVQRGHEVTVLASSASILFDPNNSSALKIEVFPTSLTKTEFENIIRQQIKRWSELPKDTFWLYFSQMQEIMWKFGDITRNFCKDVVSNKKLMKKLQKSRFDVVFADAIFPCSELLAELLNTPLVYSLRFTPGYNFEKHCGGFLFPPSYVPVVMSELSDHMTFMERVKNMIYMLYFDFCFQIYAMKKWDQFYSEVLGRPTTLSETMGKADIWLIRNSWNFQFPHPLLPNVDFVGGLHCKPAKPLPKEMEEFVQSSGENGVVVFSLGSMVTNMKEERANVIASALAQIPQKVLWRFDGKKPDTLGLNTRLYKWIPQNDLLGHPKTRAFITHGGSNGIYEAIYHGVPMVGIPLFADQPDNIAHMKAKGAAVRLDFDTMSSTDLVNALKTVINDPLYKENVMKLSRIQHDQPVKPLDRAVFWIEFVMRHKGAKHLRPAAHDLTWFQYHSLDVIGFLLACVATVIFIIMKCCLFCFWKFARKGKKGKSD.

Positions 1 to 21 (MSVKWTSVILLIQLSFYFSSG) are cleaved as a signal peptide. Asn67 and Asn68 each carry an N-linked (GlcNAc...) asparagine glycan. A helical transmembrane segment spans residues 493–513 (VIGFLLACVATVIFIIMKCCL).

It belongs to the UDP-glycosyltransferase family. Expressed in liver, prostate, kidney, testis, adrenal, bile duct, bladder, colon, small intestine, cerebellum and pancreas.

It is found in the microsome membrane. The protein localises to the endoplasmic reticulum membrane. The enzyme catalyses glucuronate acceptor + UDP-alpha-D-glucuronate = acceptor beta-D-glucuronoside + UDP + H(+). Its function is as follows. UDPGT is of major importance in the conjugation and subsequent elimination of potentially toxic xenobiotics and endogenous compounds. This isozyme displays activity toward 3-hydroxyandrogens. It is principally active on C19 steroids having a hydroxyl group at position 3-alpha of the steroid molecule and also active on planar phenols and bile acids. This chain is UDP-glucuronosyltransferase 2B18 (UGT2B18), found in Macaca fascicularis (Crab-eating macaque).